A 4456-amino-acid chain; its full sequence is Dynein axonemal heavy chain 2 (4456 aa).

The segment covering 1–12 has biased composition (basic residues); that stretch reads MASKAEKKRKVA. A disordered region spans residues 1 to 55; sequence MASKAEKKRKVAGRGGARAGRVVRAPQSTAGPGATEASLLPDGQEPEPESGKEDS. The stem stretch occupies residues 1–1795; that stretch reads MASKAEKKRK…RQTNTQFQYG (1795 aa). A coiled-coil region spans residues 1218–1274; it reads LDQIAQMRAMLMAMRDEENNLRSNLGIFKIEQPVSKDLQILEKELDALQQVWEITRD. The stretch at 1439–1474 is one TPR 1 repeat; it reads EDNQVALSTMKASRFVKAFEKDVDHWERCLSLILEV. 4 AAA regions span residues 1794 to 2015, 2075 to 2302, 2407 to 2654, and 2751 to 3003; these read YGYE…LLRY, DTIE…DNCN, RYPP…VFQG, and EYNL…LRRY. Residues 1832–1839, 2113–2120, and 2445–2452 contribute to the ATP site; these read GPAGTGKT, GGTGSSKT, and GPVGTGKT. Residues 2750 to 2783 form a TPR 2 repeat; that stretch reads NEYNLSPSVVPMQLVLFREAIEHITRIVRVIGQP. ATP is bound at residue 2791-2798; the sequence is GIGGSGRQ. Residues 3018 to 3301 form a stalk region; sequence YKKLLGEKRQ…EELRKKSEEM (284 aa). A coiled-coil region spans residues 3041–3078; the sequence is FKIDETREKVEVMSLELEDAKKKVAEFQKQCEEYLVII. A TPR 3 repeat occupies 3101–3134; it reads IEEVKCQALADNAQKDLEEALPALEEAMRALESL. Coiled coils occupy residues 3245 to 3333 and 3552 to 3596; these read KRIR…EEDL and VRKE…GSLL. AAA stretches follow at residues 3387–3617 and 3833–4052; these read LTNP…EVTE and VTSF…LLSL. 2 TPR repeats span residues 4101-4134 and 4135-4169; these read TTPFYRLSVLDTYYIPKDGSLASYKEYISMLPSM and DPPEAFGQHPNADVASQITEARTLFETLLSLQPQI.

The protein belongs to the dynein heavy chain family. As to quaternary structure, part of the axonemal inner dynein arm complex that consists of at least two heavy chains and a number of intermediate and light chains. Interacts with DNAI4.

It is found in the cytoplasm. The protein localises to the cytoskeleton. The protein resides in the cilium axoneme. It localises to the flagellum axoneme. Its function is as follows. As part of the axonemal inner dynein arm complex plays a central role in ciliary beat. Expressed in sperm flagellum, it is required for sperm motility. Dyneins are microtubule-based molecular motors possessing ATPase activities that can convert the chemical energy of ATP into relative sliding between adjacent microtubule doublets to generate ciliary bending. In Mus musculus (Mouse), this protein is Dynein axonemal heavy chain 2.